A 245-amino-acid polypeptide reads, in one-letter code: CGVPAIQPVLSGLSRIVNGEEAVPGSWPWQVSLQDKTGFHFCGGSLINENWVVTAAHCGVTTSDVVVAGEFDQGSSSEKIQKLKIAKVFKNSKYNSLTINNDITLLKLSTAASFSQTVSAVCLPSASDDFAAGTTCVTTGWGLTRYTNANTPDRLQQASLPLLSNTNCKKYWGTKIKDAMICAGASGVSSCMGDSGGPLVCKKNGAWTLVGIVSWGSSTCSTSTPGVYARVTALVNWVQQTLAAN.

5 disulfides stabilise this stretch: cysteine 1–cysteine 122, cysteine 42–cysteine 58, cysteine 136–cysteine 201, cysteine 168–cysteine 182, and cysteine 191–cysteine 220. A propeptide spanning residues 14–15 is cleaved from the precursor; the sequence is SR. Positions 16-243 constitute a Peptidase S1 domain; that stretch reads IVNGEEAVPG…LVNWVQQTLA (228 aa). Catalysis depends on charge relay system residues histidine 57 and aspartate 102. A propeptide spanning residues 147–148 is cleaved from the precursor; it reads TN. The active-site Charge relay system is serine 195.

Belongs to the peptidase S1 family.

It is found in the secreted. It localises to the extracellular space. It catalyses the reaction Preferential cleavage: Tyr-|-Xaa, Trp-|-Xaa, Phe-|-Xaa, Leu-|-Xaa.. The protein is Chymotrypsinogen A of Bos taurus (Bovine).